Consider the following 561-residue polypeptide: Putative transport protein ASA_2308 (561 aa).

5 consecutive transmembrane segments (helical) span residues 8–28 (LLHQ…LLLG), 37–57 (IGNT…GFEF), 66–86 (FMLF…SVFL), 90–110 (IHYI…TVGL), and 161–181 (NMGI…MLVV). 2 consecutive RCK C-terminal domains span residues 206 to 291 (SDNE…NYRN) and 293 to 376 (KEVF…KIGF). 5 helical membrane passes run 386 to 406 (LVAF…SLVF), 409 to 429 (LEFG…MGYL), 450 to 470 (LGLA…ILDH), 476 to 496 (AVVL…GYLF), and 541 to 561 (TYAV…GFWF).

This sequence belongs to the AAE transporter (TC 2.A.81) family. YbjL subfamily.

The protein resides in the cell membrane. The chain is Putative transport protein ASA_2308 from Aeromonas salmonicida (strain A449).